A 766-amino-acid chain; its full sequence is Leucine-rich repeat and fibronectin type III domain-containing protein 1 (766 aa).

Residues Met1–Gly31 form the signal peptide. In terms of domain architecture, LRRNT spans Gln32 to Arg65. Residues Gln32–Met536 lie on the Extracellular side of the membrane. LRR repeat units lie at residues Arg66–Asn87, Ser90–Asp111, Ala114–Gly135, Asn138–Ala159, Thr163–Gln184, Asn187–Gln208, and Lys211–Leu232. Asn87 carries N-linked (GlcNAc...) asparagine glycosylation. One can recognise an LRRCT domain in the interval Asn252–Pro298. The Ig-like domain maps to Pro299 to Cys386. Residues Cys321 and Cys370 are joined by a disulfide bond. N-linked (GlcNAc...) asparagine glycosylation occurs at Asn343. The interval Pro397–Ser424 is disordered. Residues Ser424–Asp520 enclose the Fibronectin type-III domain. A helical membrane pass occupies residues Ile537 to Ile557. The Cytoplasmic portion of the chain corresponds to Arg558 to Val766. Disordered stretches follow at residues Arg568–Pro601 and Leu645–Gly742. Phosphoserine is present on Ser713. Residues Tyr714 to Thr727 are compositionally biased toward basic residues. The PDZ-binding motif lies at Glu763 to Val766.

It belongs to the LRFN family. In terms of assembly, can form heteromeric complexes with LRFN2, LRFN3, LRFN4 and LRFN5. Forms homomeric complexes, but not across cell junctions. Interacts with DLG4. Also interacts with DLG1, DLG2, and DLG3. Interacts with 2 AMPA receptor subunits GRIA1 and GRIA2 and NMDA receptor subunit GRIN1. Glycosylated. Predominantly expressed in the brain, with a weak, but broad expression in the cerebral cortex and diencephalic nuclei. Also detected in other parts of the central nervous system, including the olfactory bulb, pons, cerebellum, and medulla oblongata, as well as in the peripheral nervous system, such as the ganglia of cranial nerves and the dorsal root ganglion during gestation.

The protein resides in the membrane. It localises to the synapse. Its subcellular location is the postsynaptic density membrane. Functionally, promotes neurite outgrowth in hippocampal neurons. Involved in the regulation and maintenance of excitatory synapses. Induces the clustering of excitatory postsynaptic proteins, including DLG4, DLGAP1, GRIA1 and GRIN1. This is Leucine-rich repeat and fibronectin type III domain-containing protein 1 (Lrfn1) from Mus musculus (Mouse).